The chain runs to 243 residues: 6-carboxyhexanoate--CoA ligase (243 aa).

It belongs to the BioW family. In terms of assembly, homodimer. It depends on Mg(2+) as a cofactor.

The enzyme catalyses heptanedioate + ATP + CoA = 6-carboxyhexanoyl-CoA + AMP + diphosphate. It functions in the pathway metabolic intermediate metabolism; pimeloyl-CoA biosynthesis; pimeloyl-CoA from pimelate: step 1/1. Catalyzes the transformation of pimelate into pimeloyl-CoA with concomitant hydrolysis of ATP to AMP. The protein is 6-carboxyhexanoate--CoA ligase of Thermocrinis albus (strain DSM 14484 / JCM 11386 / HI 11/12).